Consider the following 419-residue polypeptide: Heparan-sulfate 6-O-sulfotransferase 3-B (419 aa).

Residues 1 to 7 are Cytoplasmic-facing; it reads MNDKPNK. Residues 8 to 28 form a helical; Signal-anchor for type II membrane protein membrane-spanning segment; that stretch reads WIFIPILAILFVMIGYQYVCP. Over 29–419 the chain is Lumenal; that stretch reads AGGQACHFRT…EDYASQVVRW (391 aa). The N-linked (GlcNAc...) asparagine glycan is linked to Asn77. 101 to 109 is a binding site for 3'-phosphoadenylyl sulfate; the sequence is HIQKTGGTT. Substrate is bound by residues 131–132, Arg148, Trp153, and His158; that span reads KK. His158 (proton acceptor) is an active-site residue. 3'-phosphoadenylyl sulfate is bound by residues Arg191 and Ser199. Substrate contacts are provided by His203 and Trp210. 2 N-linked (GlcNAc...) asparagine glycosylation sites follow: Asn270 and Asn275. 323-325 is a binding site for 3'-phosphoadenylyl sulfate; it reads TQI. Asn326 carries an N-linked (GlcNAc...) asparagine glycan. 329-330 contributes to the 3'-phosphoadenylyl sulfate binding site; that stretch reads RA. Residues Asn393 and Asn402 are each glycosylated (N-linked (GlcNAc...) asparagine).

Belongs to the sulfotransferase 6 family. In terms of tissue distribution, in early somitogenesis, expressed in presumptive forebrain and midbrain, tail bud and Kupffer's vesicle. During mid-somitogenesis, ubiquitous expression which is strongest in the somites and eye. During late somitogenesis, predominantly expressed in eye, hindbrain and ventral somites. At 24 hours post-fertilization (hpf), restricted to lens and neural retina, brain, otic vesicle and somites. At 36 hpf, brain expression is restricted to telencephalon. At 48 hpf, restricted to telencephalon and pectoral fin.

It is found in the membrane. The enzyme catalyses alpha-D-glucosaminyl-[heparan sulfate](n) + 3'-phosphoadenylyl sulfate = 6-sulfo-alpha-D-glucosaminyl-[heparan sulfate](n) + adenosine 3',5'-bisphosphate + H(+). Its function is as follows. 6-O-sulfation enzyme which catalyzes the transfer of sulfate from 3'-phosphoadenosine 5'-phosphosulfate (PAPS) to position 6 of the N-sulfoglucosamine residue (GlcNS) of heparan sulfate. The chain is Heparan-sulfate 6-O-sulfotransferase 3-B from Danio rerio (Zebrafish).